Consider the following 333-residue polypeptide: L-lactate dehydrogenase B chain (333 aa).

Residues 29-57 (GQVGMACAVSILGKSLCDELALVDVLEDK) and R99 contribute to the NAD(+) site. Substrate contacts are provided by R106, N138, and R169. Residue N138 participates in NAD(+) binding. The active-site Proton acceptor is the H193. T248 is a binding site for substrate.

This sequence belongs to the LDH/MDH superfamily. LDH family. As to quaternary structure, homotetramer.

The protein resides in the cytoplasm. It catalyses the reaction (S)-lactate + NAD(+) = pyruvate + NADH + H(+). Its pathway is fermentation; pyruvate fermentation to lactate; (S)-lactate from pyruvate: step 1/1. Functionally, interconverts simultaneously and stereospecifically pyruvate and lactate with concomitant interconversion of NADH and NAD(+). This Caiman crocodilus apaporiensis (Rio Apaporis caiman) protein is L-lactate dehydrogenase B chain (LDHB).